The primary structure comprises 498 residues: ATP synthase subunit alpha 1 (498 aa).

It belongs to the ATPase alpha/beta chains family. As to quaternary structure, F-type ATPases have 2 components, CF(1) - the catalytic core - and CF(0) - the membrane proton channel. CF(1) has five subunits: alpha(3), beta(3), gamma(1), delta(1), epsilon(1). CF(0) has three main subunits: a(1), b(2) and c(9-12). The alpha and beta chains form an alternating ring which encloses part of the gamma chain. CF(1) is attached to CF(0) by a central stalk formed by the gamma and epsilon chains, while a peripheral stalk is formed by the delta and b chains.

It is found in the cell membrane. It carries out the reaction ATP + H2O + 4 H(+)(in) = ADP + phosphate + 5 H(+)(out). Its function is as follows. Produces ATP from ADP in the presence of a proton gradient across the membrane. The alpha chain is a regulatory subunit. This chain is ATP synthase subunit alpha 1, found in Listeria monocytogenes serotype 4b (strain F2365).